A 348-amino-acid chain; its full sequence is Serpentine receptor class alpha-29 (348 aa).

6 consecutive transmembrane segments (helical) span residues 28-48 (FILM…QTLW), 108-130 (FLYY…DRLF), 145-165 (GFIV…FWTF), 193-213 (INDS…FLYI), 246-266 (CIII…PSIF), and 280-300 (LILA…LIVI).

This sequence belongs to the nematode receptor-like protein sra family.

The protein resides in the membrane. The sequence is that of Serpentine receptor class alpha-29 (sra-29) from Caenorhabditis elegans.